A 162-amino-acid chain; its full sequence is Inner membrane protein YbjO (162 aa).

The Periplasmic segment spans residues 1 to 23; that stretch reads MEDETLGFFKKTSSSHARLNVPA. The chain crosses the membrane as a helical span at residues 24–44; it reads LVQVAALAIIMIRGLDVLMIF. Residues 45-66 lie on the Cytoplasmic side of the membrane; the sequence is NTLGVRGIGEFIHRSVQTWSLT. The chain crosses the membrane as a helical span at residues 67-87; sequence LVFLSSLVLVFIEIWCAFSLV. Topologically, residues 88–94 are periplasmic; it reads KGRRWAR. Residues 95–115 form a helical membrane-spanning segment; the sequence is WLYLLTQITAASYLWAASLGY. The Cytoplasmic portion of the chain corresponds to 116–162; the sequence is GYPELFSIPGESKREIFHSLMLQKLPDMLILMLLFVPSTSRRFFQLQ.

It is found in the cell inner membrane. In Escherichia coli O157:H7, this protein is Inner membrane protein YbjO (ybjO).